Here is a 66-residue protein sequence, read N- to C-terminus: Alpha-like toxin BmK-M7 (66 aa).

An LCN-type CS-alpha/beta domain is found at 2–64 (RDGYIALPHN…VPIRVPGRCH (63 aa)). Cystine bridges form between C12-C63, C16-C36, C22-C46, and C26-C48.

The protein belongs to the long (4 C-C) scorpion toxin superfamily. Sodium channel inhibitor family. Alpha subfamily. In terms of tissue distribution, expressed by the venom gland.

It localises to the secreted. Functionally, alpha toxins bind voltage-independently at site-3 of sodium channels (Nav) and inhibit the inactivation of the activated channels, thereby blocking neuronal transmission. This toxin is active on both mammals and insects. It can be considered as a cardiotoxin, as it can bind to human cardiac sodium channel and modify its normal properties. The chain is Alpha-like toxin BmK-M7 from Olivierus martensii (Manchurian scorpion).